A 182-amino-acid chain; its full sequence is Ribosome-recycling factor (182 aa).

The protein belongs to the RRF family.

Its subcellular location is the cytoplasm. Responsible for the release of ribosomes from messenger RNA at the termination of protein biosynthesis. May increase the efficiency of translation by recycling ribosomes from one round of translation to another. This chain is Ribosome-recycling factor, found in Hydrogenobaculum sp. (strain Y04AAS1).